Consider the following 1909-residue polypeptide: Endoribonuclease Dicer homolog 1 (1909 aa).

The disordered stretch occupies residues threonine 99–asparagine 177. Over residues glycine 110 to arginine 124 the composition is skewed to basic and acidic residues. Positions serine 131–asparagine 146 are enriched in polar residues. Positions asparagine 147–asparagine 177 are enriched in basic and acidic residues. Residues valine 256 to asparagine 433 form the Helicase ATP-binding domain. Leucine 269 to threonine 276 lines the ATP pocket. The DECH box signature appears at aspartate 378–histidine 381. The Helicase C-terminal domain occupies serine 651–threonine 812. The 96-residue stretch at alanine 840–alanine 935 folds into the Dicer dsRNA-binding fold domain. Residues lysine 929 to arginine 952 are disordered. A PAZ domain is found at glutamate 1189 to proline 1318. RNase III domains are found at residues leucine 1342–glycine 1518 and phenylalanine 1559–glycine 1707. Glutamate 1597, aspartate 1693, and glutamate 1696 together coordinate Mg(2+). 2 consecutive DRBM domains span residues histidine 1733 to glutamate 1796 and phenylalanine 1831 to lysine 1906. The disordered stretch occupies residues glutamate 1801–phenylalanine 1831.

This sequence belongs to the helicase family. Dicer subfamily. In terms of assembly, interacts (via N-terminus) with DDL. Interacts (via DRBM domains) with DRB1, DRB2 and DRB5. May interact with AGO1 or AGO10 through their common PAZ domains. Requires Mg(2+) as cofactor. Mn(2+) is required as a cofactor. As to expression, highly expressed in flowers and seeds and detected in leaves and stems. Found in ovule integuments, inflorescence and floral meristems, stigma of flowers until just before pollination, vasculature of the funiculus, and embryo.

The protein resides in the nucleus. Functionally, ribonuclease (RNase) III involved in RNA-mediated post-transcriptional gene silencing (PTGS). Functions in the microRNAs (miRNAs) biogenesis pathway by cleaving primary miRNAs (pri-miRNAs) and precursor miRNAs (pre-miRNAs). Functions with DRB1/HYL1 and SERRATE proteins for accurate pri-miRNAs to miRNAs processing. Indirectly involved in the production of trans-acting small interfering RNAs (ta-siRNAs) derived from the TAS1, TAS2 or TAS3 endogenous transcripts by participating in the production of their initiating miRNAs. Involved in the processing of natural siRNAs (nat-siRNAs, derived from cis-natural antisense transcripts) by cleaving 24 nucleotide nat-siRNAs into 21 nucleotide nat-siRNAs. Can produce RDR6-dependent endogenous ta-siRNAs derived from TAS1 and TAS2. Required for the production of 30-40 nucleotide bacterial-induced long siRNAs (lsiRNA). Acts redundantly with DICER-LIKE 3 (DCL3) to promote flowering via repression of FLOWERING LOCUS C (FLC). Represses antiviral RNA silencing through negative regulation of the expression of DCL4 and DCL3. The protein is Endoribonuclease Dicer homolog 1 (DCL1) of Arabidopsis thaliana (Mouse-ear cress).